The primary structure comprises 117 residues: Large ribosomal subunit protein uL18 (117 aa).

It belongs to the universal ribosomal protein uL18 family. Part of the 50S ribosomal subunit; part of the 5S rRNA/L5/L18/L25 subcomplex. Contacts the 5S and 23S rRNAs.

Its function is as follows. This is one of the proteins that bind and probably mediate the attachment of the 5S RNA into the large ribosomal subunit, where it forms part of the central protuberance. The polypeptide is Large ribosomal subunit protein uL18 (Vibrio proteolyticus (Aeromonas proteolytica)).